Reading from the N-terminus, the 155-residue chain is Rusticyanin (155 aa).

Residues 53-155 form the Plastocyanin-like domain; it reads SFEVHDKKNP…TGMFGKIIVK (103 aa). Positions 85, 138, 143, and 148 each coordinate Cu cation.

Monomer. Requires Cu cation as cofactor.

It localises to the periplasm. Functionally, electron carrier from cytochrome c552 to the A-type oxidase. The protein is Rusticyanin (rus) of Acidithiobacillus ferrooxidans (Thiobacillus ferrooxidans).